The following is a 322-amino-acid chain: Thiamine thiazole synthase (322 aa).

Residues Cys-84, 105 to 106, Gly-113, and Val-178 each bind substrate; that span reads EA. Cys-211 carries the 2,3-didehydroalanine (Cys) modification. Substrate-binding positions include Asp-213, His-228, Met-280, and 290–292; that span reads RMG.

It belongs to the THI4 family. As to quaternary structure, homooctamer. The cofactor is Fe cation. Post-translationally, during the catalytic reaction, a sulfide is transferred from Cys-211 to a reaction intermediate, generating a dehydroalanine residue.

Its subcellular location is the cytoplasm. The protein resides in the nucleus. The catalysed reaction is [ADP-thiazole synthase]-L-cysteine + glycine + NAD(+) = [ADP-thiazole synthase]-dehydroalanine + ADP-5-ethyl-4-methylthiazole-2-carboxylate + nicotinamide + 3 H2O + 2 H(+). Functionally, involved in biosynthesis of the thiamine precursor thiazole. Catalyzes the conversion of NAD and glycine to adenosine diphosphate 5-(2-hydroxyethyl)-4-methylthiazole-2-carboxylic acid (ADT), an adenylated thiazole intermediate. The reaction includes an iron-dependent sulfide transfer from a conserved cysteine residue of the protein to a thiazole intermediate. The enzyme can only undergo a single turnover, which suggests it is a suicide enzyme. May have additional roles in adaptation to various stress conditions and in DNA damage tolerance. This is Thiamine thiazole synthase from Fusarium vanettenii (strain ATCC MYA-4622 / CBS 123669 / FGSC 9596 / NRRL 45880 / 77-13-4) (Fusarium solani subsp. pisi).